The chain runs to 364 residues: Alanine racemase (364 aa).

The Proton acceptor; specific for D-alanine role is filled by Lys-39. Position 39 is an N6-(pyridoxal phosphate)lysine (Lys-39). Arg-137 contacts substrate. The active-site Proton acceptor; specific for L-alanine is Tyr-258. Met-306 is a binding site for substrate.

The protein belongs to the alanine racemase family. Requires pyridoxal 5'-phosphate as cofactor.

The enzyme catalyses L-alanine = D-alanine. It functions in the pathway amino-acid biosynthesis; D-alanine biosynthesis; D-alanine from L-alanine: step 1/1. Its function is as follows. Catalyzes the interconversion of L-alanine and D-alanine. May also act on other amino acids. The chain is Alanine racemase (alr) from Methylobacterium sp. (strain 4-46).